The sequence spans 457 residues: Multidrug resistance protein MdtK (457 aa).

The next 12 helical transmembrane spans lie at 11 to 31 (LLAL…MGVV), 53 to 73 (IWLP…PIIA), 93 to 113 (WLAI…KFLI), 127 to 147 (AVGF…YQVL), 160 to 180 (GMVI…IFIY), 188 to 208 (LGGV…FLLM), 243 to 263 (LPIA…ALLI), 280 to 300 (FSSL…IRVG), 316 to 336 (YTGI…SIIL), 357 to 377 (LMLF…GAGV), 387 to 407 (IFYI…YILG), and 418 to 438 (PQGF…MIFA).

It belongs to the multi antimicrobial extrusion (MATE) (TC 2.A.66.1) family. MdtK subfamily.

It is found in the cell inner membrane. Multidrug efflux pump that functions probably as a Na(+)/drug antiporter. The sequence is that of Multidrug resistance protein MdtK from Photorhabdus laumondii subsp. laumondii (strain DSM 15139 / CIP 105565 / TT01) (Photorhabdus luminescens subsp. laumondii).